The primary structure comprises 2126 residues: Phthioceranic/hydroxyphthioceranic acid synthase (2126 aa).

One can recognise a Ketosynthase family 3 (KS3) domain in the interval V24–Q447. C196 (acyl-thioester intermediate; for beta-ketoacyl synthase activity) is an active-site residue. Active-site for beta-ketoacyl synthase activity residues include H331 and H367. A linker domain (LD) region spans residues P449 to D549. Positions R550–E849 are acyltransferase (AT). Catalysis depends on S641, which acts as the Acyl-ester intermediate; for acyltransferase activity. Residues S909–T1191 form a dehydratase (DH) region. The tract at residues H914–V1032 is N-terminal hotdog fold. The PKS/mFAS DH domain occupies H914–K1198. Residue H947 is the Proton acceptor; for dehydratase activity of the active site. A C-terminal hotdog fold region spans residues P1051–K1198. D1115 serves as the catalytic Proton donor; for dehydratase activity. Residues K1227–D1398 form a pseudo beta-ketoacyl reductase (PsiKR) region. Residues S1426–I1750 are enoylreductase (ER). The interval G1772–F2019 is beta-ketoacyl reductase (KR). NADP(+) is bound by residues L1780–L1783, S1803–Q1806, D1831–I1832, and F1904–S1905. Residues D2040–Q2126 enclose the Carrier domain. An O-(pantetheine 4'-phosphoryl)serine modification is found at S2075.

Requires pantetheine 4'-phosphate as cofactor.

It carries out the reaction hexadecanoyl-[(hydroxy)phthioceranic acid synthase] + 7 (S)-methylmalonyl-CoA + 14 NADPH + 21 H(+) = C37-phthioceranyl-[(hydroxy)phthioceranic acid synthase] + 7 CO2 + 14 NADP(+) + 7 CoA + 7 H2O. The catalysed reaction is hexadecanoyl-[(hydroxy)phthioceranic acid synthase] + 8 (S)-methylmalonyl-CoA + 16 NADPH + 24 H(+) = C40-phthioceranyl-[(hydroxy)phthioceranic acid synthase] + 8 CO2 + 16 NADP(+) + 8 CoA + 8 H2O. This chain is Phthioceranic/hydroxyphthioceranic acid synthase (pks2), found in Mycobacterium bovis (strain BCG / Pasteur 1173P2).